Here is a 108-residue protein sequence, read N- to C-terminus: uncharacterized protein (108 aa).

The next 3 helical transmembrane spans lie at 24-44, 55-75, and 88-108; these read LWIT…GGLL, AHMA…YLAM, and RFEI…SIGI.

It to cation A.eutrophus efflux system protein CzcD.

Its subcellular location is the cell membrane. This is an uncharacterized protein from Geobacillus stearothermophilus (Bacillus stearothermophilus).